Consider the following 254-residue polypeptide: DNA repair protein RecO (254 aa).

It belongs to the RecO family.

Involved in DNA repair and RecF pathway recombination. The polypeptide is DNA repair protein RecO (Anaeromyxobacter sp. (strain K)).